The sequence spans 165 residues: Nucleotide-binding protein NATL1_05371 (165 aa).

Belongs to the YajQ family.

Its function is as follows. Nucleotide-binding protein. The sequence is that of Nucleotide-binding protein NATL1_05371 from Prochlorococcus marinus (strain NATL1A).